The following is a 337-amino-acid chain: Glucokinase (337 aa).

11 to 16 (ADIGGT) provides a ligand contact to ATP.

It belongs to the bacterial glucokinase family.

The protein resides in the cytoplasm. The enzyme catalyses D-glucose + ATP = D-glucose 6-phosphate + ADP + H(+). This chain is Glucokinase, found in Xylella fastidiosa (strain 9a5c).